Consider the following 646-residue polypeptide: Leukotriene A-4 hydrolase homolog (646 aa).

Residues 172-174 (QCQ) and 307-312 (PYGGME) contribute to the a peptide site. A Zn(2+)-binding site is contributed by His336. Glu337 acts as the Proton acceptor in catalysis. Zn(2+)-binding residues include His340 and Glu359. Tyr424 serves as the catalytic Proton donor.

This sequence belongs to the peptidase M1 family. It depends on Zn(2+) as a cofactor.

Its subcellular location is the cytoplasm. The protein localises to the nucleus. The catalysed reaction is leukotriene A4 + H2O = leukotriene B4. It functions in the pathway lipid metabolism; leukotriene B4 biosynthesis. Functionally, aminopeptidase that preferentially cleaves tripeptides. Also has low epoxide hydrolase activity (in vitro). Can hydrolyze an epoxide moiety of LTA(4) to form LTB(4) (in vitro). The sequence is that of Leukotriene A-4 hydrolase homolog from Botryotinia fuckeliana (strain B05.10) (Noble rot fungus).